A 601-amino-acid chain; its full sequence is MEIALVPLENGGAMTVRGGGEAGTGCSQAIGGELQCPPTAGLSDGPKEPAPRARGTQRGVDPGGRPLPPLPQDPQQPRRLPPEDEEGEGDPALGMAEDQVLGAGSLHHQRVLINISGLRFETQLGTLAQFPNTLLGDPAKRLRYFDPLRNEYFFDRNRPSFDGILYYYQSGGRLRRPVNVSLDVFADEIRFYQLGDEAMERFREDEGFIKEEEKPLPRNEFQRQVWLIFEYPESSGSARGIAIVSVLVILISIITFCLETLPEFRDERELLRHPPVPHQPLGPSRGANGSGPLAPPSGPTVAPLLPRTLADPFFIVETTCVIWFTFELLVRFFACPSKAEFSRNIMNIIDVVAIFPYFITLGTELAEQPGGGGGGQNGQQAMSLAILRVIRLVRVFRIFKLSRHSKGLQILGKTLQASMRELGLLIFFLFIGVILFSSAVYFAEADNQETHFSSIPDAFWWAVVTMTTVGYGDMRPVTVGGKIVGSLCAIAGVLTIALPVPVIVSNFNYFYHRETDHEEQAALKEEQGSQSHGTGLDSGGPRKASWSKGSLCKAGVSLENADGARRGSCPLEKCNLKAKSNVDLRRSLYALCLDTSRETDL.

Positions Met-1 to Glu-200 are tetramerization domain. Topologically, residues Met-1–Gly-236 are cytoplasmic. The segment at Gly-19 to Leu-93 is disordered. The span at Arg-65–Pro-74 shows a compositional bias: pro residues. Lys-210 participates in a covalent cross-link: Glycyl lysine isopeptide (Lys-Gly) (interchain with G-Cter in SUMO). Residues Ser-237–Leu-258 form a helical membrane-spanning segment. The Extracellular segment spans residues Glu-259–Pro-312. A disordered region spans residues Pro-275–Ser-297. An N-linked (GlcNAc...) asparagine glycan is attached at Asn-288. A helical transmembrane segment spans residues Phe-313–Ala-334. Cys-335 carries the S-palmitoyl cysteine lipid modification. Residues Cys-335–Ile-345 lie on the Cytoplasmic side of the membrane. Residues Met-346 to Ala-366 traverse the membrane as a helical segment. At Glu-367–Ser-383 the chain is on the extracellular side. A helical; Voltage-sensor membrane pass occupies residues Leu-384 to His-404. At Ser-405–Met-419 the chain is on the cytoplasmic side. An S4-S5 linker region spans residues Lys-406–Met-419. A helical membrane pass occupies residues Arg-420 to Tyr-441. Residues Phe-442–Ile-455 lie on the Extracellular side of the membrane. The segment at residues Pro-456–Thr-467 is an intramembrane region (helical). The Selectivity filter signature appears at Thr-468–Asp-473. Residues Thr-468–Arg-475 lie within the membrane without spanning it. Over Pro-476–Lys-482 the chain is Extracellular. The chain crosses the membrane as a helical span at residues Ile-483–Tyr-511. At His-512–Leu-601 the chain is on the cytoplasmic side. Residues Ala-521 to Ser-545 form a disordered region. Lys-524 participates in a covalent cross-link: Glycyl lysine isopeptide (Lys-Gly) (interchain with G-Cter in SUMO). Residues Thr-599–Leu-601 carry the PDZ-binding motif.

The protein belongs to the potassium channel family. A (Shaker) (TC 1.A.1.2) subfamily. Kv1.5/KCNA5 sub-subfamily. As to quaternary structure, homotetramer and heterotetramer of potassium channel proteins. Interacts with DLG1, which enhances channel currents. Forms a ternary complex with DLG1 and CAV3. Interacts with KCNAB1. Interacts with UBE2I. Interacts with XIRP2; the interaction is required for normal action potential configuration in the heart. Post-translationally, glycosylated. Sumoylated on Lys-210, and Lys-524, preferentially with SUMO3. Sumoylation regulates the voltage sensitivity of the channel.

Its subcellular location is the cell membrane. It catalyses the reaction K(+)(in) = K(+)(out). Functionally, voltage-gated potassium channel that mediates transmembrane potassium transport in excitable membranes. Forms tetrameric potassium-selective channels through which potassium ions pass in accordance with their electrochemical gradient. The channel alternates between opened and closed conformations in response to the voltage difference across the membrane. Can form functional homotetrameric channels and heterotetrameric channels that contain variable proportions of KCNA1, KCNA2, KCNA4, KCNA5, and possibly other family members as well; channel properties depend on the type of alpha subunits that are part of the channel. Channel properties are modulated by cytoplasmic beta subunits that regulate the subcellular location of the alpha subunits and promote rapid inactivation. Homotetrameric channels display rapid activation and slow inactivation. Required for normal electrical conduction including formation of the infranodal ventricular conduction system and normal action potential configuration, as a result of its interaction with XIRP2. May play a role in regulating the secretion of insulin in normal pancreatic islets. This chain is Potassium voltage-gated channel subfamily A member 5 (KCNA5), found in Mustela putorius furo (European domestic ferret).